A 181-amino-acid polypeptide reads, in one-letter code: Peptidyl-tRNA hydrolase (181 aa).

Tyr-14 serves as a coordination point for tRNA. Catalysis depends on His-19, which acts as the Proton acceptor. The tRNA site is built by Tyr-62, Asn-64, and Asn-108.

Belongs to the PTH family. As to quaternary structure, monomer.

The protein resides in the cytoplasm. It catalyses the reaction an N-acyl-L-alpha-aminoacyl-tRNA + H2O = an N-acyl-L-amino acid + a tRNA + H(+). Its function is as follows. Hydrolyzes ribosome-free peptidyl-tRNAs (with 1 or more amino acids incorporated), which drop off the ribosome during protein synthesis, or as a result of ribosome stalling. In terms of biological role, catalyzes the release of premature peptidyl moieties from peptidyl-tRNA molecules trapped in stalled 50S ribosomal subunits, and thus maintains levels of free tRNAs and 50S ribosomes. In Campylobacter jejuni (strain RM1221), this protein is Peptidyl-tRNA hydrolase.